A 453-amino-acid polypeptide reads, in one-letter code: Flap endonuclease 1 (453 aa).

The tract at residues 1–105 (MGIKGLTGLL…SVLAKRFARR (105 aa)) is N-domain. Residue Asp-34 participates in Mg(2+) binding. Residues Arg-47 and Arg-71 each coordinate DNA. Asp-87, Glu-159, Glu-161, Asp-180, and Asp-182 together coordinate Mg(2+). Positions 123-254 (DVDKLARRQV…KTALKLMREH (132 aa)) are I-domain. Glu-159 provides a ligand contact to DNA. DNA contacts are provided by Gly-232 and Asp-234. Residue Asp-234 coordinates Mg(2+). Disordered regions lie at residues 273–336 (EEIK…VASS) and 409–453 (RLDG…KSKN). Basic residues predominate over residues 320-333 (KSPKKKAPAKKKKV). Residues 406–414 (QQGRLDGFF) are interaction with PCNA. The segment covering 417 to 446 (KPKEPAAKDTGKGKGKATKGEKRKAEEKGS) has biased composition (basic and acidic residues).

Belongs to the XPG/RAD2 endonuclease family. FEN1 subfamily. As to quaternary structure, interacts with PCNA. Three molecules of FEN1 bind to one PCNA trimer with each molecule binding to one PCNA monomer. PCNA stimulates the nuclease activity without altering cleavage specificity. Mg(2+) serves as cofactor. Post-translationally, phosphorylated. Phosphorylation upon DNA damage induces relocalization to the nuclear plasma.

It is found in the nucleus. It localises to the nucleolus. The protein localises to the nucleoplasm. Its subcellular location is the mitochondrion. Its function is as follows. Structure-specific nuclease with 5'-flap endonuclease and 5'-3' exonuclease activities involved in DNA replication and repair. During DNA replication, cleaves the 5'-overhanging flap structure that is generated by displacement synthesis when DNA polymerase encounters the 5'-end of a downstream Okazaki fragment. It enters the flap from the 5'-end and then tracks to cleave the flap base, leaving a nick for ligation. Also involved in the long patch base excision repair (LP-BER) pathway, by cleaving within the apurinic/apyrimidinic (AP) site-terminated flap. Acts as a genome stabilization factor that prevents flaps from equilibrating into structures that lead to duplications and deletions. Also possesses 5'-3' exonuclease activity on nicked or gapped double-stranded DNA, and exhibits RNase H activity. Also involved in replication and repair of rDNA and in repairing mitochondrial DNA. In Cryptococcus neoformans var. neoformans serotype D (strain B-3501A) (Filobasidiella neoformans), this protein is Flap endonuclease 1.